A 1009-amino-acid polypeptide reads, in one-letter code: Probable beta-galactosidase B (1009 aa).

A signal peptide spans 1–21 (MAQLFTKIIVYFLLFASPLLA). N28 carries N-linked (GlcNAc...) asparagine glycosylation. Y85 lines the substrate pocket. N95 carries N-linked (GlcNAc...) asparagine glycosylation. Substrate is bound by residues N130, A131, E132, and N190. E191 serves as the catalytic Proton donor. N247 is a glycosylation site (N-linked (GlcNAc...) asparagine). Y260 provides a ligand contact to substrate. C266 and C319 are disulfide-bonded. E303 serves as the catalytic Nucleophile. Y368 contributes to the substrate binding site. N-linked (GlcNAc...) asparagine glycosylation is found at N375, N406, N427, N451, N682, N740, N771, N784, N826, and N883.

This sequence belongs to the glycosyl hydrolase 35 family.

The protein resides in the secreted. It catalyses the reaction Hydrolysis of terminal non-reducing beta-D-galactose residues in beta-D-galactosides.. Its function is as follows. Cleaves beta-linked terminal galactosyl residues from gangliosides, glycoproteins, and glycosaminoglycans. The chain is Probable beta-galactosidase B (lacB) from Talaromyces marneffei (strain ATCC 18224 / CBS 334.59 / QM 7333) (Penicillium marneffei).